The sequence spans 65 residues: Large ribosomal subunit protein uL30 (65 aa).

Belongs to the universal ribosomal protein uL30 family. As to quaternary structure, part of the 50S ribosomal subunit.

This chain is Large ribosomal subunit protein uL30, found in Rickettsia bellii (strain OSU 85-389).